A 199-amino-acid chain; its full sequence is Protein-methionine-sulfoxide reductase heme-binding subunit MsrQ (199 aa).

5 helical membrane-spanning segments follow: residues Trp10 to Val30, Leu79 to Glu99, Leu118 to Trp138, Trp147 to Trp167, and Val169 to Leu189.

It belongs to the MsrQ family. Heterodimer of a catalytic subunit (MsrP) and a heme-binding subunit (MsrQ). Requires FMN as cofactor. Heme b is required as a cofactor.

The protein localises to the cell inner membrane. Its function is as follows. Part of the MsrPQ system that repairs oxidized periplasmic proteins containing methionine sulfoxide residues (Met-O), using respiratory chain electrons. Thus protects these proteins from oxidative-stress damage caused by reactive species of oxygen and chlorine generated by the host defense mechanisms. MsrPQ is essential for the maintenance of envelope integrity under bleach stress, rescuing a wide series of structurally unrelated periplasmic proteins from methionine oxidation. MsrQ provides electrons for reduction to the reductase catalytic subunit MsrP, using the quinone pool of the respiratory chain. This is Protein-methionine-sulfoxide reductase heme-binding subunit MsrQ from Yersinia enterocolitica serotype O:8 / biotype 1B (strain NCTC 13174 / 8081).